We begin with the raw amino-acid sequence, 332 residues long: UPF0194 membrane protein YbhG (332 aa).

The signal sequence occupies residues 1–26 (MMKKPVVIELAVVVLAAVVAGGYWWY). Residues 108 to 209 (EEIAQAAAAV…LNLQDSTLIA (102 aa)) are a coiled coil.

The protein belongs to the UPF0194 family.

It localises to the periplasm. The sequence is that of UPF0194 membrane protein YbhG (ybhG) from Shigella sonnei (strain Ss046).